Consider the following 138-residue polypeptide: Putative pre-16S rRNA nuclease (138 aa).

The protein belongs to the YqgF nuclease family.

The protein resides in the cytoplasm. Its function is as follows. Could be a nuclease involved in processing of the 5'-end of pre-16S rRNA. The chain is Putative pre-16S rRNA nuclease from Porphyromonas gingivalis (strain ATCC BAA-308 / W83).